A 336-amino-acid polypeptide reads, in one-letter code: Phospho-N-acetylmuramoyl-pentapeptide-transferase (336 aa).

Transmembrane regions (helical) follow at residues 3-23 (LTLI…PYFI), 53-73 (GGTV…LFSI), 78-98 (SLAL…IGFL), 118-138 (LALQ…PSGI), 143-163 (VFGY…FWVV), 174-194 (GIDG…GVIA), 200-220 (FDVL…FCFN), 226-246 (VFMG…ISIA), 254-274 (LIIG…VFYF), and 316-336 (AFLW…LYVF).

This sequence belongs to the glycosyltransferase 4 family. MraY subfamily. It depends on Mg(2+) as a cofactor.

Its subcellular location is the cell membrane. It catalyses the reaction UDP-N-acetyl-alpha-D-muramoyl-L-alanyl-gamma-D-glutamyl-L-lysyl-D-alanyl-D-alanine + di-trans,octa-cis-undecaprenyl phosphate = Mur2Ac(oyl-L-Ala-gamma-D-Glu-L-Lys-D-Ala-D-Ala)-di-trans,octa-cis-undecaprenyl diphosphate + UMP. Its pathway is cell wall biogenesis; peptidoglycan biosynthesis. Catalyzes the initial step of the lipid cycle reactions in the biosynthesis of the cell wall peptidoglycan: transfers peptidoglycan precursor phospho-MurNAc-pentapeptide from UDP-MurNAc-pentapeptide onto the lipid carrier undecaprenyl phosphate, yielding undecaprenyl-pyrophosphoryl-MurNAc-pentapeptide, known as lipid I. The chain is Phospho-N-acetylmuramoyl-pentapeptide-transferase from Streptococcus pyogenes serotype M18 (strain MGAS8232).